A 472-amino-acid polypeptide reads, in one-letter code: Methanethiol oxidase (472 aa).

Belongs to the selenium-binding protein family.

It localises to the nucleus. It is found in the cytoplasm. The protein resides in the cytosol. The protein localises to the membrane. It carries out the reaction methanethiol + O2 + H2O = hydrogen sulfide + formaldehyde + H2O2 + H(+). Its pathway is organosulfur degradation. Catalyzes the oxidation of methanethiol, an organosulfur compound known to be produced in substantial amounts by gut bacteria. Selenium-binding protein which may be involved in the sensing of reactive xenobiotics in the cytoplasm. May be involved in intra-Golgi protein transport. The polypeptide is Methanethiol oxidase (selenbp1) (Xenopus tropicalis (Western clawed frog)).